A 220-amino-acid polypeptide reads, in one-letter code: Adenylate kinase (220 aa).

Residue 10-15 (GAGKGT) coordinates ATP. The tract at residues 30–59 (STGDMLRAAVKNCTPLGLKAKEIMDAGGLV) is NMP. AMP contacts are provided by residues threonine 31, arginine 36, 57-59 (GLV), 85-88 (GFPR), and glutamine 92. Residues 126–163 (GRRTCPSCGKGFHVLFAPPRKAGVCDFCGADLVQRGDD) form an LID region. Arginine 127 lines the ATP pocket. Residues cysteine 130, cysteine 133, cysteine 150, and cysteine 153 each coordinate Zn(2+). Residues arginine 160 and arginine 171 each contribute to the AMP site. Leucine 199 provides a ligand contact to ATP.

Belongs to the adenylate kinase family. In terms of assembly, monomer.

The protein resides in the cytoplasm. The enzyme catalyses AMP + ATP = 2 ADP. Its pathway is purine metabolism; AMP biosynthesis via salvage pathway; AMP from ADP: step 1/1. In terms of biological role, catalyzes the reversible transfer of the terminal phosphate group between ATP and AMP. Plays an important role in cellular energy homeostasis and in adenine nucleotide metabolism. The protein is Adenylate kinase of Pelobacter propionicus (strain DSM 2379 / NBRC 103807 / OttBd1).